The primary structure comprises 159 residues: Siroheme decarboxylase beta subunit (159 aa).

152–157 (KTSMTY) is a binding site for substrate.

Belongs to the Ahb/Nir family. As to quaternary structure, forms a heterodimer composed of AhbA and AhbB.

The catalysed reaction is siroheme + 2 H(+) = 12,18-didecarboxysiroheme + 2 CO2. The protein operates within porphyrin-containing compound metabolism; protoheme biosynthesis. Functionally, involved in siroheme-dependent heme b biosynthesis. Catalyzes the decarboxylation of siroheme into didecarboxysiroheme. Siroheme is decarboxylated to monodecarboxysiroheme, which is in turn decarboxylated to didecarboxysiroheme. This Desulfovibrio desulfuricans (strain ATCC 27774 / DSM 6949 / MB) protein is Siroheme decarboxylase beta subunit.